We begin with the raw amino-acid sequence, 77 residues long: uncharacterized protein (77 aa).

Residues 13-67 form the HTH cro/C1-type domain; that stretch reads VLQYMVNNDYSLNQLALEIGVSPATLSRVLNGERRPGQLVIGKMLHYFNLKFEDL. Positions 24 to 43 form a DNA-binding region, H-T-H motif; it reads LNQLALEIGVSPATLSRVLN.

It localises to the cytoplasm. This is an uncharacterized protein from Bacillus subtilis (strain 168).